A 215-amino-acid chain; its full sequence is tRNA (guanine-N(7)-)-methyltransferase (215 aa).

S-adenosyl-L-methionine contacts are provided by Glu44, Glu69, Asp96, and Asp118. The active site involves Asp118. Substrate contacts are provided by residues Lys122, Asp154, and 191 to 194; that span reads TEYE.

Belongs to the class I-like SAM-binding methyltransferase superfamily. TrmB family.

It catalyses the reaction guanosine(46) in tRNA + S-adenosyl-L-methionine = N(7)-methylguanosine(46) in tRNA + S-adenosyl-L-homocysteine. It participates in tRNA modification; N(7)-methylguanine-tRNA biosynthesis. In terms of biological role, catalyzes the formation of N(7)-methylguanine at position 46 (m7G46) in tRNA. In Exiguobacterium sp. (strain ATCC BAA-1283 / AT1b), this protein is tRNA (guanine-N(7)-)-methyltransferase.